A 694-amino-acid polypeptide reads, in one-letter code: Long-chain-fatty-acid--CoA ligase 3 (694 aa).

The tract at residues 1-25 is disordered; that stretch reads MSEQHSVAVGKAANEHETAPRRNVR. Residue S2 is modified to N-acetylserine. Residue 269–280 coordinates ATP; it reads YTSGSISAPKGV. Positions 527–576 match the FACS motif; sequence DGWFRTGDIVEWTPKGQLKIIDRRKNLVKTLNGEYIALEKLESVYRSNSY.

This sequence belongs to the ATP-dependent AMP-binding enzyme family. Interacts with FRK1. Mg(2+) is required as a cofactor.

The protein resides in the cell membrane. The catalysed reaction is a long-chain fatty acid + ATP + CoA = a long-chain fatty acyl-CoA + AMP + diphosphate. The enzyme catalyses (9Z)-octadecenoate + ATP + CoA = (9Z)-octadecenoyl-CoA + AMP + diphosphate. It catalyses the reaction hexadecanoate + ATP + CoA = hexadecanoyl-CoA + AMP + diphosphate. It carries out the reaction (9Z)-hexadecenoate + ATP + CoA = (9Z)-hexadecenoyl-CoA + AMP + diphosphate. The catalysed reaction is (9Z)-tetradecenoate + ATP + CoA = (9Z)-tetradecenoyl-CoA + AMP + diphosphate. The enzyme catalyses (9Z,12Z)-octadecadienoate + ATP + CoA = (9Z,12Z)-octadecadienoyl-CoA + AMP + diphosphate. Its function is as follows. Activates endogenous long-chain fatty acids (LCFA) by esterification of the fatty acids into metabolically active CoA-thioesters for subsequent degradation or incorporation into phospholipids. Acts preferentially on C16 and C18 fatty acids with a cis-double bond at C-9-C-10. The chain is Long-chain-fatty-acid--CoA ligase 3 (FAA3) from Saccharomyces cerevisiae (strain ATCC 204508 / S288c) (Baker's yeast).